An 84-amino-acid chain; its full sequence is Small ribosomal subunit protein uS17 (84 aa).

The protein belongs to the universal ribosomal protein uS17 family. Part of the 30S ribosomal subunit.

One of the primary rRNA binding proteins, it binds specifically to the 5'-end of 16S ribosomal RNA. The sequence is that of Small ribosomal subunit protein uS17 from Clostridioides difficile (strain 630) (Peptoclostridium difficile).